We begin with the raw amino-acid sequence, 331 residues long: Olfactory receptor 10S1 (331 aa).

Over 1–38 the chain is Extracellular; the sequence is MTSRSVCEKMTMTTENPNQTVVSHFFLEGLRYTAKHSS. The N-linked (GlcNAc...) asparagine glycan is linked to N18. Residues 39–59 form a helical membrane-spanning segment; it reads LFFLLFLLIYSITVAGNLLIL. The Cytoplasmic portion of the chain corresponds to 60 to 67; it reads LTVGSDSH. The chain crosses the membrane as a helical span at residues 68 to 88; sequence LSLPMYHFLGHLSFLDACLST. Residues 89–113 lie on the Extracellular side of the membrane; that stretch reads VTVPKVMAGLLTLDGKVISFEGCAV. An intrachain disulfide couples C111 to C203. Residues 114 to 134 traverse the membrane as a helical segment; that stretch reads QLYCFHFLASTECFLYTVMAY. Residues 135-153 lie on the Cytoplasmic side of the membrane; it reads DRYLAICQPLHYPVAMNRR. Residues 154 to 174 traverse the membrane as a helical segment; that stretch reads MCAEMAGITWAIGATHAAIHT. The Extracellular segment spans residues 175–211; sequence SLTFRLLYCGPCHIAYFFCDIPPVLKLACTDTTINEL. Residues 212 to 231 form a helical membrane-spanning segment; that stretch reads VMLASIGIVAAGCLILIVIS. Topologically, residues 232–251 are cytoplasmic; the sequence is YIFIVAAVLRIRTAQGRQRA. Residues 252–272 form a helical membrane-spanning segment; the sequence is FSPCTAQLTGVLLYYVPPVCI. Over 273-283 the chain is Extracellular; sequence YLQPRSSEAGA. A helical transmembrane segment spans residues 284-304; it reads GAPAVFYTIVTPMLNPFIYTL. The Cytoplasmic portion of the chain corresponds to 305–331; the sequence is RNKEVKHALQRLLCSSFRESTAGSPPP.

The protein belongs to the G-protein coupled receptor 1 family.

Its subcellular location is the cell membrane. In terms of biological role, odorant receptor. The sequence is that of Olfactory receptor 10S1 (OR10S1) from Homo sapiens (Human).